We begin with the raw amino-acid sequence, 465 residues long: NADH-quinone oxidoreductase subunit N (465 aa).

The next 13 helical transmembrane spans lie at 6-26 (ILPE…GIVF), 30-50 (TINL…ILSA), 66-86 (LYIR…LLLL), 98-118 (SILI…NNLI), 156-176 (ALSS…TGLV), 194-214 (IVFG…IAPF), 226-246 (PTIV…TFLI), 261-281 (FQPV…FGAL), 289-309 (LLAY…SIFT), 317-337 (LIYL…FIQI), 363-383 (ILLF…KLFI), 391-411 (GFIG…YYYL), and 432-452 (SLFI…MCVE).

Belongs to the complex I subunit 2 family. As to quaternary structure, NDH-1 is composed of 14 different subunits. Subunits NuoA, H, J, K, L, M, N constitute the membrane sector of the complex.

The protein localises to the cell membrane. The enzyme catalyses a quinone + NADH + 5 H(+)(in) = a quinol + NAD(+) + 4 H(+)(out). In terms of biological role, NDH-1 shuttles electrons from NADH, via FMN and iron-sulfur (Fe-S) centers, to quinones in the respiratory chain. The immediate electron acceptor for the enzyme in this species is believed to be ubiquinone. Couples the redox reaction to proton translocation (for every two electrons transferred, four hydrogen ions are translocated across the cytoplasmic membrane), and thus conserves the redox energy in a proton gradient. In Wolbachia sp. subsp. Brugia malayi (strain TRS), this protein is NADH-quinone oxidoreductase subunit N.